The primary structure comprises 274 residues: Rhamnulose-1-phosphate aldolase (274 aa).

Glutamate 117 is an active-site residue. Residues histidine 141, histidine 143, and histidine 212 each contribute to the Zn(2+) site.

The protein belongs to the aldolase class II family. RhaD subfamily. Homotetramer. Requires Zn(2+) as cofactor.

The protein resides in the cytoplasm. It carries out the reaction L-rhamnulose 1-phosphate = (S)-lactaldehyde + dihydroxyacetone phosphate. The protein operates within carbohydrate degradation; L-rhamnose degradation; glycerone phosphate from L-rhamnose: step 3/3. Catalyzes the reversible cleavage of L-rhamnulose-1-phosphate to dihydroxyacetone phosphate (DHAP) and L-lactaldehyde. This Escherichia coli O6:H1 (strain CFT073 / ATCC 700928 / UPEC) protein is Rhamnulose-1-phosphate aldolase.